We begin with the raw amino-acid sequence, 345 residues long: GDSL esterase/lipase At1g23500 (345 aa).

The first 24 residues, 1–24 (MNFSLLSTMLMALSSVCLFFVGYA), serve as a signal peptide directing secretion. Ser42 acts as the Nucleophile in catalysis. N-linked (GlcNAc...) asparagine glycosylation occurs at Asn103. Catalysis depends on residues Asp320 and His323.

It belongs to the 'GDSL' lipolytic enzyme family.

It is found in the secreted. This Arabidopsis thaliana (Mouse-ear cress) protein is GDSL esterase/lipase At1g23500.